We begin with the raw amino-acid sequence, 955 residues long: 2-oxoglutarate dehydrogenase E1 component (955 aa).

Belongs to the alpha-ketoglutarate dehydrogenase family. Homodimer. Part of the 2-oxoglutarate dehydrogenase (OGDH) complex composed of E1 (2-oxoglutarate dehydrogenase), E2 (dihydrolipoamide succinyltransferase) and E3 (dihydrolipoamide dehydrogenase); the complex contains multiple copies of the three enzymatic components (E1, E2 and E3). It depends on thiamine diphosphate as a cofactor.

The catalysed reaction is N(6)-[(R)-lipoyl]-L-lysyl-[protein] + 2-oxoglutarate + H(+) = N(6)-[(R)-S(8)-succinyldihydrolipoyl]-L-lysyl-[protein] + CO2. Its function is as follows. E1 component of the 2-oxoglutarate dehydrogenase (OGDH) complex which catalyzes the decarboxylation of 2-oxoglutarate, the first step in the conversion of 2-oxoglutarate to succinyl-CoA and CO(2). This chain is 2-oxoglutarate dehydrogenase E1 component, found in Bacillus cereus (strain AH187).